The sequence spans 425 residues: Glucose-6-phosphate 1-dehydrogenase (425 aa).

Positions 44 and 135 each coordinate NADP(+). Residues His165, Lys169, Glu201, and Asp220 each contribute to the substrate site. His225 (proton acceptor) is an active-site residue. Lys311 contributes to the substrate binding site.

The protein belongs to the glucose-6-phosphate dehydrogenase family.

The enzyme catalyses D-glucose 6-phosphate + NADP(+) = 6-phospho-D-glucono-1,5-lactone + NADPH + H(+). Its pathway is carbohydrate degradation; pentose phosphate pathway; D-ribulose 5-phosphate from D-glucose 6-phosphate (oxidative stage): step 1/3. In terms of biological role, catalyzes the oxidation of glucose 6-phosphate to 6-phosphogluconolactone. The chain is Glucose-6-phosphate 1-dehydrogenase from Helicobacter pylori (strain J99 / ATCC 700824) (Campylobacter pylori J99).